We begin with the raw amino-acid sequence, 719 residues long: Photosystem I P700 chlorophyll a apoprotein A1 (719 aa).

A run of 8 helical transmembrane segments spans residues 59–82 (IFGA…FHGA), 145–168 (LYCT…FHYH), 184–208 (LNHH…HVSL), 280–298 (TAHH…GHMY), 335–358 (WHAQ…HHMY), 374–400 (LSLF…IFMV), 422–444 (AIIS…LYIH), and 520–538 (FLVH…LILL). 2 residues coordinate [4Fe-4S] cluster: Cys562 and Cys571. The next 2 helical transmembrane spans lie at 578 to 599 (HVFL…HFSW) and 653 to 675 (LSAY…MFLF). His664 provides a ligand contact to chlorophyll a'. Residues Met672 and Tyr680 each coordinate chlorophyll a. Residue Trp681 participates in phylloquinone binding. The chain crosses the membrane as a helical span at residues 713–719 (AVGVTHT).

It belongs to the PsaA/PsaB family. The PsaA/B heterodimer binds the P700 chlorophyll special pair and subsequent electron acceptors. PSI consists of a core antenna complex that captures photons, and an electron transfer chain that converts photonic excitation into a charge separation. The eukaryotic PSI reaction center is composed of at least 11 subunits. P700 is a chlorophyll a/chlorophyll a' dimer, A0 is one or more chlorophyll a, A1 is one or both phylloquinones and FX is a shared 4Fe-4S iron-sulfur center. is required as a cofactor.

The protein resides in the plastid. The protein localises to the chloroplast thylakoid membrane. It carries out the reaction reduced [plastocyanin] + hnu + oxidized [2Fe-2S]-[ferredoxin] = oxidized [plastocyanin] + reduced [2Fe-2S]-[ferredoxin]. Its function is as follows. PsaA and PsaB bind P700, the primary electron donor of photosystem I (PSI), as well as the electron acceptors A0, A1 and FX. PSI is a plastocyanin-ferredoxin oxidoreductase, converting photonic excitation into a charge separation, which transfers an electron from the donor P700 chlorophyll pair to the spectroscopically characterized acceptors A0, A1, FX, FA and FB in turn. Oxidized P700 is reduced on the lumenal side of the thylakoid membrane by plastocyanin. This Asplenium nidus (Bird's nest fern) protein is Photosystem I P700 chlorophyll a apoprotein A1.